Reading from the N-terminus, the 364-residue chain is DNA replication and repair protein RecF (364 aa).

30 to 37 is an ATP binding site; it reads GNNGQGKT.

Belongs to the RecF family.

Its subcellular location is the cytoplasm. Functionally, the RecF protein is involved in DNA metabolism; it is required for DNA replication and normal SOS inducibility. RecF binds preferentially to single-stranded, linear DNA. It also seems to bind ATP. The polypeptide is DNA replication and repair protein RecF (Geotalea daltonii (strain DSM 22248 / JCM 15807 / FRC-32) (Geobacter daltonii)).